The following is a 156-amino-acid chain: Protein FAM162A (156 aa).

Residues 37 to 57 (TNGFCSKPQESPKPPDQHTYS) form a disordered region. The required for proapoptotic activity stretch occupies residues 78–104 (RFKKEDEIPETVSFEMLDAAKNKVRVK). The chain crosses the membrane as a helical span at residues 105–122 (ISYVMIALTVAGCVLMVI).

This sequence belongs to the UPF0389 family. As to quaternary structure, interacts with HSP90AB1; HSP90AB1 is essential for FAM162A mitochondrial localization and pro-apoptotic activity. Interacts with VDAC2; the interaction is probably involved in inducing mitochondrial permeability transition.

The protein resides in the mitochondrion membrane. In terms of biological role, proposed to be involved in regulation of apoptosis; the exact mechanism may differ between cell types/tissues. May be involved in hypoxia-induced cell death of transformed cells implicating cytochrome C release and caspase activation (such as CASP9) and inducing mitochondrial permeability transition. May be involved in hypoxia-induced cell death of neuronal cells probably by promoting release of AIFM1 from mitochondria to cytoplasm and its translocation to the nucleus; however, the involvement of caspases has been reported conflictingly. The sequence is that of Protein FAM162A (FAM162A) from Bos taurus (Bovine).